The chain runs to 172 residues: uncharacterized protein (172 aa).

Transmembrane regions (helical) follow at residues 44–68 (VLVS…AALT), 86–110 (LASY…VFSL), and 117–135 (VVFI…VTLF).

The protein belongs to the chlamydial CPn_0442/CT_006/TC_0274 family.

It localises to the cell membrane. This is an uncharacterized protein from Chlamydia pneumoniae (Chlamydophila pneumoniae).